We begin with the raw amino-acid sequence, 492 residues long: Ketol-acid reductoisomerase (NADP(+)) (492 aa).

One can recognise a KARI N-terminal Rossmann domain in the interval 17–208 (LGVCEFMDRS…GGDRAGVLKS (192 aa)). Residues 45-48 (CGAQ), arginine 68, arginine 76, serine 78, and 108-110 (DKQ) contribute to the NADP(+) site. Histidine 132 is a catalytic residue. Position 158 (glycine 158) interacts with NADP(+). 2 consecutive KARI C-terminal knotted domains span residues 209 to 353 (SFVA…AEQE) and 354 to 487 (YYDN…MTEM). Mg(2+)-binding residues include aspartate 217, glutamate 221, glutamate 389, and glutamate 393. Serine 414 is a substrate binding site.

This sequence belongs to the ketol-acid reductoisomerase family. Mg(2+) serves as cofactor.

It carries out the reaction (2R)-2,3-dihydroxy-3-methylbutanoate + NADP(+) = (2S)-2-acetolactate + NADPH + H(+). It catalyses the reaction (2R,3R)-2,3-dihydroxy-3-methylpentanoate + NADP(+) = (S)-2-ethyl-2-hydroxy-3-oxobutanoate + NADPH + H(+). It participates in amino-acid biosynthesis; L-isoleucine biosynthesis; L-isoleucine from 2-oxobutanoate: step 2/4. The protein operates within amino-acid biosynthesis; L-valine biosynthesis; L-valine from pyruvate: step 2/4. Functionally, involved in the biosynthesis of branched-chain amino acids (BCAA). Catalyzes an alkyl-migration followed by a ketol-acid reduction of (S)-2-acetolactate (S2AL) to yield (R)-2,3-dihydroxy-isovalerate. In the isomerase reaction, S2AL is rearranged via a Mg-dependent methyl migration to produce 3-hydroxy-3-methyl-2-ketobutyrate (HMKB). In the reductase reaction, this 2-ketoacid undergoes a metal-dependent reduction by NADPH to yield (R)-2,3-dihydroxy-isovalerate. This chain is Ketol-acid reductoisomerase (NADP(+)), found in Cytophaga hutchinsonii (strain ATCC 33406 / DSM 1761 / CIP 103989 / NBRC 15051 / NCIMB 9469 / D465).